Reading from the N-terminus, the 464-residue chain is Light-independent protochlorophyllide reductase subunit N (464 aa).

Positions 29, 54, and 114 each coordinate [4Fe-4S] cluster.

It belongs to the BchN/ChlN family. Protochlorophyllide reductase is composed of three subunits; ChlL, ChlN and ChlB. Forms a heterotetramer of two ChlB and two ChlN subunits. The cofactor is [4Fe-4S] cluster.

The protein resides in the plastid. The protein localises to the chloroplast. It catalyses the reaction chlorophyllide a + oxidized 2[4Fe-4S]-[ferredoxin] + 2 ADP + 2 phosphate = protochlorophyllide a + reduced 2[4Fe-4S]-[ferredoxin] + 2 ATP + 2 H2O. Its pathway is porphyrin-containing compound metabolism; chlorophyll biosynthesis (light-independent). Component of the dark-operative protochlorophyllide reductase (DPOR) that uses Mg-ATP and reduced ferredoxin to reduce ring D of protochlorophyllide (Pchlide) to form chlorophyllide a (Chlide). This reaction is light-independent. The NB-protein (ChlN-ChlB) is the catalytic component of the complex. This Stigeoclonium helveticum (Green alga) protein is Light-independent protochlorophyllide reductase subunit N.